A 335-amino-acid polypeptide reads, in one-letter code: [Citrate [pro-3S]-lyase] ligase (335 aa).

Residues 1–131 (MQFERISTEQ…SATRLQKQCS (131 aa)) form the N-acetyltransferase domain.

The catalysed reaction is holo-[citrate lyase ACP] + acetate + ATP = acetyl-[citrate lyase ACP] + AMP + diphosphate. Acetylation of prosthetic group (2-(5''-phosphoribosyl)-3'-dephosphocoenzyme-A) of the gamma subunit of citrate lyase. The chain is [Citrate [pro-3S]-lyase] ligase (citC) from Haemophilus influenzae (strain ATCC 51907 / DSM 11121 / KW20 / Rd).